The following is a 59-amino-acid chain: Sperm protamine P1-type (59 aa).

The disordered stretch occupies residues 1-59; it reads MARYRRNRSRSRSRRRRRRRGGRGGRRGRRRRRHGQRRRGRRGRERTRRRRRRRRRSSS.

The protein belongs to the protamine P1 family. In terms of tissue distribution, testis.

It is found in the nucleus. It localises to the chromosome. Functionally, protamines substitute for histones in the chromatin of sperm during the haploid phase of spermatogenesis. They compact sperm DNA into a highly condensed, stable and inactive complex. In Chrysemys picta bellii (Western painted turtle), this protein is Sperm protamine P1-type.